The primary structure comprises 65 residues: Small ribosomal subunit protein uS10 (65 aa).

It belongs to the universal ribosomal protein uS10 family. Part of the 30S ribosomal subunit.

In terms of biological role, involved in the binding of tRNA to the ribosomes. This Desulfurococcus mucosus (Desulfurococcus mobilis) protein is Small ribosomal subunit protein uS10 (rps10).